Here is a 154-residue protein sequence, read N- to C-terminus: D-aminoacyl-tRNA deacylase (154 aa).

Residues 142 to 143 (GP) carry the Gly-cisPro motif, important for rejection of L-amino acids motif.

Belongs to the DTD family. In terms of assembly, homodimer.

The protein localises to the cytoplasm. The enzyme catalyses glycyl-tRNA(Ala) + H2O = tRNA(Ala) + glycine + H(+). The catalysed reaction is a D-aminoacyl-tRNA + H2O = a tRNA + a D-alpha-amino acid + H(+). Its function is as follows. An aminoacyl-tRNA editing enzyme that deacylates mischarged D-aminoacyl-tRNAs. Also deacylates mischarged glycyl-tRNA(Ala), protecting cells against glycine mischarging by AlaRS. Acts via tRNA-based rather than protein-based catalysis; rejects L-amino acids rather than detecting D-amino acids in the active site. By recycling D-aminoacyl-tRNA to D-amino acids and free tRNA molecules, this enzyme counteracts the toxicity associated with the formation of D-aminoacyl-tRNA entities in vivo and helps enforce protein L-homochirality. The polypeptide is D-aminoacyl-tRNA deacylase (DTD1) (Yarrowia lipolytica (strain CLIB 122 / E 150) (Yeast)).